The chain runs to 567 residues: MSSRLGAVPATSGPTTFKQQRSTRIVGAKNSRTQCSIKDNSFQYTIPHDDSLSGSSSASSCEPVSDFPASFRKSTYWMKMRRIKPAATSHVEGSGGVSAKGKRKPRQEEDEDYREFPQKKHKLYGRKQRPKTQPNPKSQARRIRKEPPVYAAGSLEEQWYLEIVDKGSVSCPTCQAVGRKTIEGLKKHMENCKQEMFTCHHCGKQLRSLAGMKYHVMANHNSLPILKAGDEIDEPSERERLRTVLKRLGKLRCMRESCSSSFTSIMGYLYHVRKCGKGAAELEKMTLKCHHCGKPYRSKAGLAYHLRSEHGPISFFPESGQPECLKEMNLESKSGGRVQRRSAKIAVYHLQELASAELAKEWPKRKVLQDLVPDDRKLKYTRPGLPTFSQEVLHKWKTDIKKYHRIQCPNQGCEAVYSSVSGLKAHLGSCTLGNFVAGKYKCLLCQKEFVSESGVKYHINSVHAEDWFVVNPTTTKSFEKLMKIKQRQQEEEKRRQQHRSRRSLRRRQQPGIELPETELSLRVGKDQRRNNEELVVSASCKEPEQEPVPAQFQKVKPPKTNHKRGRK.

The disordered stretch occupies residues 1–32 (MSSRLGAVPATSGPTTFKQQRSTRIVGAKNSR). The span at 12-23 (SGPTTFKQQRST) shows a compositional bias: polar residues. Glycyl lysine isopeptide (Lys-Gly) (interchain with G-Cter in SUMO2) cross-links involve residues K18 and K84. Positions 86–148 (AATSHVEGSG…QARRIRKEPP (63 aa)) are disordered. Basic residues predominate over residues 119–130 (KKHKLYGRKQRP). The C2H2-type 1 zinc-finger motif lies at 197–220 (FTCHHCGKQLRSLAGMKYHVMANH). A Glycyl lysine isopeptide (Lys-Gly) (interchain with G-Cter in SUMO2) cross-link involves residue K227. The segment at 287 to 310 (LKCHHCGKPYRSKAGLAYHLRSEH) adopts a C2H2-type 2 zinc-finger fold. A Glycyl lysine isopeptide (Lys-Gly) (interchain with G-Cter in SUMO2) cross-link involves residue K333. Residues 406–430 (IQCPNQGCEAVYSSVSGLKAHLGSC) form a C2H2-type 3; atypical zinc finger. A C2H2-type 4 zinc finger spans residues 440-463 (YKCLLCQKEFVSESGVKYHINSVH). The segment at 486–567 (QRQQEEEKRR…PKTNHKRGRK (82 aa)) is disordered. Basic residues predominate over residues 495–508 (RQQHRSRRSLRRRQ). Over residues 523–532 (VGKDQRRNNE) the composition is skewed to basic and acidic residues. A compositionally biased stretch (basic residues) spans 556-567 (KPPKTNHKRGRK).

It belongs to the krueppel C2H2-type zinc-finger protein family.

It localises to the nucleus. May be involved in transcriptional regulation. The protein is Zinc finger protein 512 (ZNF512) of Homo sapiens (Human).